A 105-amino-acid polypeptide reads, in one-letter code: Large ribosomal subunit protein eL36 (105 aa).

At lysine 62 the chain carries N6-acetyllysine.

This sequence belongs to the eukaryotic ribosomal protein eL36 family. Component of the large ribosomal subunit.

It is found in the cytoplasm. Its subcellular location is the cytosol. In terms of biological role, component of the large ribosomal subunit. The ribosome is a large ribonucleoprotein complex responsible for the synthesis of proteins in the cell. The polypeptide is Large ribosomal subunit protein eL36 (RPL36) (Bos taurus (Bovine)).